Here is a 148-residue protein sequence, read N- to C-terminus: Hemoglobin subunit beta (148 aa).

In terms of domain architecture, Globin spans 3-148; that stretch reads XWTDXERHVI…AVAALGKQYH (146 aa). The heme b site is built by His64 and His93.

This sequence belongs to the globin family. Heterotetramer of two alpha chains and two beta chains. Red blood cells.

In terms of biological role, involved in oxygen transport from gills to the various peripheral tissues. This Silurus asotus (Amur catfish) protein is Hemoglobin subunit beta (hbb).